The chain runs to 1404 residues: DNA-directed RNA polymerase subunit beta' (1404 aa).

Zn(2+)-binding residues include Cys70, Cys72, Cys85, and Cys88. Mg(2+)-binding residues include Asp460, Asp462, and Asp464. Residues Cys825, Cys899, Cys906, and Cys909 each coordinate Zn(2+).

The protein belongs to the RNA polymerase beta' chain family. As to quaternary structure, the RNAP catalytic core consists of 2 alpha, 1 beta, 1 beta' and 1 omega subunit. When a sigma factor is associated with the core the holoenzyme is formed, which can initiate transcription. It depends on Mg(2+) as a cofactor. The cofactor is Zn(2+).

The enzyme catalyses RNA(n) + a ribonucleoside 5'-triphosphate = RNA(n+1) + diphosphate. DNA-dependent RNA polymerase catalyzes the transcription of DNA into RNA using the four ribonucleoside triphosphates as substrates. The sequence is that of DNA-directed RNA polymerase subunit beta' from Nitrosomonas eutropha (strain DSM 101675 / C91 / Nm57).